Consider the following 75-residue polypeptide: Exodeoxyribonuclease 7 small subunit (75 aa).

Belongs to the XseB family. As to quaternary structure, heterooligomer composed of large and small subunits.

The protein localises to the cytoplasm. It catalyses the reaction Exonucleolytic cleavage in either 5'- to 3'- or 3'- to 5'-direction to yield nucleoside 5'-phosphates.. Bidirectionally degrades single-stranded DNA into large acid-insoluble oligonucleotides, which are then degraded further into small acid-soluble oligonucleotides. The sequence is that of Exodeoxyribonuclease 7 small subunit from Chlamydia caviae (strain ATCC VR-813 / DSM 19441 / 03DC25 / GPIC) (Chlamydophila caviae).